The following is a 256-amino-acid chain: Follistatin-related protein 3 (256 aa).

The signal sequence occupies residues 1 to 23 (MRPGALWPLLWGALVWAVGSVGA). The TB domain occupies 34–105 (GVCWLQQGKE…SCDGVECGPG (72 aa)). 8 cysteine pairs are disulfide-bonded: Cys36-Cys59, Cys46-Cys90, Cys60-Cys93, Cys97-Cys108, Cys102-Cys117, Cys119-Cys151, Cys123-Cys144, and Cys133-Cys165. Asn71 carries an N-linked (GlcNAc...) asparagine glycan. The region spanning 97 to 117 (CDGVECGPGKACRMLGGRPHC) is the Follistatin-like 1 domain. Kazal-like domains lie at 111–167 (LGGR…RCQK) and 187–243 (SAHC…ICTG). One can recognise a Follistatin-like 2 domain in the interval 168–191 (SCAQVVCPRPQSCLVDQTGSAHCV). 3 disulfides stabilise this stretch: Cys193/Cys227, Cys198/Cys220, and Cys209/Cys241. Asn213 carries an N-linked (GlcNAc...) asparagine glycan.

Interacts with INHBA and INHBB. Interacts with FN1. Interacts with ADAM12. Interacts with MLLT10; the interaction enhances MLLT10 in vitro transcriptional activity and self-association. Interacts with MSTN.

It localises to the secreted. The protein localises to the nucleus. Its function is as follows. The secreted form is a binding and antagonizing protein for members of the TGF-beta family, such as activin, BMP2 and MSTN. Inhibits activin A-, activin B-, BMP2- and MSDT-induced cellular signaling; more effective on activin A than on activin B. Involved in bone formation; inhibits osteoclast differentiation. Involved in hematopoiesis; involved in differentiation of hemopoietic progenitor cells, increases hematopoietic cell adhesion to fibronectin and seems to contribute to the adhesion of hematopoietic precursor cells to the bone marrow stroma. The nuclear form is probably involved in transcriptional regulation via interaction with MLLT10. The polypeptide is Follistatin-related protein 3 (Fstl3) (Rattus norvegicus (Rat)).